A 134-amino-acid polypeptide reads, in one-letter code: ATP synthase epsilon chain (134 aa).

The protein belongs to the ATPase epsilon chain family. F-type ATPases have 2 components, CF(1) - the catalytic core - and CF(0) - the membrane proton channel. CF(1) has five subunits: alpha(3), beta(3), gamma(1), delta(1), epsilon(1). CF(0) has three main subunits: a, b and c.

The protein localises to the cell membrane. Its function is as follows. Produces ATP from ADP in the presence of a proton gradient across the membrane. The protein is ATP synthase epsilon chain of Carboxydothermus hydrogenoformans (strain ATCC BAA-161 / DSM 6008 / Z-2901).